A 962-amino-acid polypeptide reads, in one-letter code: UBP9-binding protein bun107 (962 aa).

WD repeat units follow at residues 25–69, 77–116, 121–162, 172–211, 214–253, and 302–339; these read DANC…GKAS, AHSA…ASCL, EHTD…EVMR, VVGP…RITD, GHTD…CLFS, and KQDA…NQDV. Positions 568-578 are enriched in low complexity; that stretch reads SPLRIRSRPSP. Disordered regions lie at residues 568–615 and 702–758; these read SPLR…QIPS and RAAS…PREL. Over residues 707–723 the composition is skewed to polar residues; it reads RVFSTGTSVTSPQALSK. Serine 717 carries the phosphoserine modification. Over residues 724–738 the composition is skewed to low complexity; that stretch reads TNNTVNNAANTENNT.

Interacts with ubp9 and bun62.

The protein resides in the cytoplasm. The protein localises to the cell tip. Its function is as follows. Required for the ubp9 recruitment to septa and cell tips but also for its enzymatic activity at these specific locations. The polypeptide is UBP9-binding protein bun107 (bun107) (Schizosaccharomyces pombe (strain 972 / ATCC 24843) (Fission yeast)).